Here is a 155-residue protein sequence, read N- to C-terminus: Catabolic 3-dehydroquinase (155 aa).

Residue Tyr-24 is the Proton acceptor of the active site. The substrate site is built by Asn-75, His-81, and Asp-88. Catalysis depends on His-101, which acts as the Proton donor. Residues Val-102–Ser-103 and Arg-112 contribute to the substrate site.

This sequence belongs to the type-II 3-dehydroquinase family. In terms of assembly, homododecamer. Adopts a ring-like structure, composed of an arrangement of two hexameric rings stacked on top of one another.

It catalyses the reaction 3-dehydroquinate = 3-dehydroshikimate + H2O. The protein operates within aromatic compound metabolism; 3,4-dihydroxybenzoate biosynthesis; 3,4-dihydroxybenzoate from 3-dehydroquinate: step 1/2. Is involved in the catabolism of quinate. Allows the utilization of quinate as carbon source via the beta-ketoadipate pathway. The sequence is that of Catabolic 3-dehydroquinase from Penicillium rubens (strain ATCC 28089 / DSM 1075 / NRRL 1951 / Wisconsin 54-1255) (Penicillium chrysogenum).